The sequence spans 894 residues: CWF19-like protein 2 (894 aa).

The interval 1 to 147 is disordered; it reads MATSMAAASG…DEKSGKDDTQ (147 aa). The segment covering 13–56 has biased composition (basic and acidic residues); that stretch reads ESAKSIEERKEQTRNARAEVLRQAKANFEKEERRKELKRLRGED. Positions 13 to 107 form a coiled coil; that stretch reads ESAKSIEERK…KKQKYEKNNE (95 aa). Ser75 is subject to Phosphoserine. The span at 76 to 99 shows a compositional bias: basic residues; sequence VKKKKKKDKHSKKAKKEKKKKSKK. A compositionally biased stretch (basic and acidic residues) spans 128–147; sequence PDKEKAWKVKDEKSGKDDTQ. Residues 166 to 281 are a coiled coil; the sequence is SSSSLKAEKE…AEKAASTKED (116 aa). Lys171 participates in a covalent cross-link: Glycyl lysine isopeptide (Lys-Gly) (interchain with G-Cter in SUMO2). Over residues 270 to 284 the composition is skewed to basic and acidic residues; the sequence is EDAEKAASTKEDYRR. The segment at 270–483 is disordered; sequence EDAEKAASTK…STFAGSPERE (214 aa). Positions 320–330 are enriched in polar residues; that stretch reads TTDTAKNSNNE. The span at 332 to 352 shows a compositional bias: basic and acidic residues; it reads FIGDEKDKRPGSLETCRRESN. A phosphoserine mark is found at Ser360 and Ser372. Basic and acidic residues-rich tracts occupy residues 410–430 and 440–473; these read KNSEERLTSWSRSDGRGDKKH and TDEHQHVPEDPREKSQDEVLRDDPPKKEHLRDTK. 2 positions are modified to phosphoserine: Ser479 and Ser484. The stretch at 502–530 forms a coiled coil; that stretch reads KAEMMGNMELAEQLKVQLEKANKFKETIT. Residues 561–583 form a disordered region; the sequence is NTPGKSLESQGGRRKRQMVSTHE. Residue Lys604 forms a Glycyl lysine isopeptide (Lys-Gly) (interchain with G-Cter in SUMO2) linkage. Residues 644-675 adopt a coiled-coil conformation; sequence AAERERLGEEEENQRKKAIAEHRSLAAQMEKC.

Belongs to the CWF19 family.

The protein is CWF19-like protein 2 (CWF19L2) of Homo sapiens (Human).